The chain runs to 309 residues: MSSKANPPQPVATAPKRSQIPILDSTMSYVEAGASGPTVLFLHGNPTSSHIWRNIIPHVAPFGRCIAPDLIGYGQSGKPDIDYRFFDHVRYLDAFLDALDIRDVLLVAQDWGTALAFHLAARRPQRVLGLAFMEFIRPFERWEDFHQRPQAREMFKALRTPGVGEKLVLEDNVFVEKVLPASVLRAMSDDEMDVYRAPFPTPQSRKPVLRLPREMPIEGQPADVAAISAHDHRALRLSTYPKLLFAGDPGALIGPQAAREFAAGLKNCSFINLGPGAHYLQEDHADAIGRAIASWLPEVVLANQTDELA.

Positions 37 to 148 (PTVLFLHGNP…FERWEDFHQR (112 aa)) constitute an AB hydrolase-1 domain. D110 serves as the catalytic Nucleophile. The Proton donor role is filled by E134. Catalysis depends on H278, which acts as the Proton acceptor.

It belongs to the haloalkane dehalogenase family. Type 2 subfamily. As to quaternary structure, monomer.

It catalyses the reaction 1-haloalkane + H2O = a halide anion + a primary alcohol + H(+). Its function is as follows. Catalyzes hydrolytic cleavage of carbon-halogen bonds in halogenated aliphatic compounds, leading to the formation of the corresponding primary alcohols, halide ions and protons. This Mesorhizobium japonicum (strain LMG 29417 / CECT 9101 / MAFF 303099) (Mesorhizobium loti (strain MAFF 303099)) protein is Haloalkane dehalogenase.